The sequence spans 409 residues: Mitochondrial import inner membrane translocase subunit TIM50-B (409 aa).

A mitochondrion-targeting transit peptide spans Met-1 to Gly-42. The Mitochondrial matrix segment spans residues Gly-43 to Lys-127. The interval Pro-93 to Glu-114 is disordered. A compositionally biased stretch (basic and acidic residues) spans Glu-102–Glu-111. The helical transmembrane segment at Leu-128–Tyr-148 threads the bilayer. Topologically, residues Gly-149–His-409 are mitochondrial intermembrane. Positions Tyr-205–Leu-348 constitute an FCP1 homology domain.

This sequence belongs to the TIM50 family. In terms of assembly, component of the TIM23 complex at least composed of Tim23, Tim17 (Tim17a1, Tim17a2 or Tim17b1) and a Tim50. Exclusively expressed in the testis.

The protein localises to the mitochondrion inner membrane. In terms of biological role, essential component of the TIM23 complex, a complex that mediates the translocation of transit peptide-containing proteins across the mitochondrial inner membrane. In Drosophila melanogaster (Fruit fly), this protein is Mitochondrial import inner membrane translocase subunit TIM50-B (ttm2).